The sequence spans 55 residues: Large ribosomal subunit protein bL33 (55 aa).

It belongs to the bacterial ribosomal protein bL33 family.

This is Large ribosomal subunit protein bL33 from Buchnera aphidicola subsp. Baizongia pistaciae (strain Bp).